Consider the following 199-residue polypeptide: Fe/S biogenesis protein NfuA (199 aa).

The [4Fe-4S] cluster site is built by Cys-151 and Cys-154.

The protein belongs to the NfuA family. In terms of assembly, homodimer. Requires [4Fe-4S] cluster as cofactor.

Involved in iron-sulfur cluster biogenesis. Binds a 4Fe-4S cluster, can transfer this cluster to apoproteins, and thereby intervenes in the maturation of Fe/S proteins. Could also act as a scaffold/chaperone for damaged Fe/S proteins. The polypeptide is Fe/S biogenesis protein NfuA (Xanthomonas euvesicatoria pv. vesicatoria (strain 85-10) (Xanthomonas campestris pv. vesicatoria)).